The chain runs to 172 residues: Galectin-related protein (172 aa).

Residue Ala2 is modified to N-acetylalanine. 2 positions are modified to phosphoserine: Ser22 and Ser25. The 130-residue stretch at 39 to 168 folds into the Galectin domain; that stretch reads PFCGHIKGGM…TIKINGDLQI (130 aa).

Monomer.

Does not bind lactose, and may not bind carbohydrates. The sequence is that of Galectin-related protein (Lgalsl) from Mus musculus (Mouse).